The sequence spans 395 residues: Cyclic AMP-responsive element-binding protein 3-like protein 4 (395 aa).

The Cytoplasmic portion of the chain corresponds to 1 to 295 (MDLGIPDLLD…QTSNKAAQTS (295 aa)). The tract at residues 82-108 (EASPGSDSGISEDPCHPDSPPAPRATS) is disordered. A bZIP domain is found at 217–280 (VLKKVRRKIR…ISLVAQLRQL (64 aa)). Residues 219-248 (KKVRRKIRNKQSAQDSRRRKKEYIDGLESR) are basic motif. The tract at residues 259–280 (LQKKVQELERHNISLVAQLRQL) is leucine-zipper. The helical; Signal-anchor for type II membrane protein transmembrane segment at 296 to 316 (TCVLILLFSLALIILPSFSPF) threads the bilayer. At 317–395 (QSRPEAGSED…IRSVLHADEM (79 aa)) the chain is on the lumenal side. The tract at residues 355 to 395 (RLREPPGAKDANGSTRTLLEKMGGKPRPSGRIRSVLHADEM) is disordered. N366 carries N-linked (GlcNAc...) asparagine glycosylation.

This sequence belongs to the bZIP family. ATF subfamily. Binds DNA as a dimer. Post-translationally, N-glycosylated in the C-terminal region. Controlled by regulated intramembrane proteolysis (RIP). Following ER stress a fragment containing the cytoplasmic transcription factor domain is released by proteolysis. The cleavage seems to be performed sequentially by site-1 and site-2 proteases (PS1 and PS2). PS1 cleavage may be suppressed by a determinant in the C-terminal region. According to PubMed:11830526, exclusively expressed in the prostate. Expressed in breast and prostate cancer cell lines. Expressed in prostatic luminal epithelial cells (at protein level). Expression is significantly more abundant in prostate cancer than in benign prostatic tissue (prostatic hyperplasia). According to PubMed:12111373, also expressed in brain, pancreas and skeletal muscle, and at lower levels in small intestine, testis, leukocyte and thymus.

Its subcellular location is the endoplasmic reticulum membrane. The protein resides in the golgi apparatus membrane. It is found in the nucleus. Its function is as follows. Transcriptional activator that may play a role in the unfolded protein response. Binds to the UPR element (UPRE) but not to CRE element. Preferentially binds DNA with to the consensus sequence 5'-T[GT]ACGT[GA][GT]-3' and has transcriptional activation activity from UPRE. Binds to NF-kappa-B site and has transcriptional activation activity from NF-kappa-B-containing regulatory elements. The polypeptide is Cyclic AMP-responsive element-binding protein 3-like protein 4 (CREB3L4) (Homo sapiens (Human)).